Reading from the N-terminus, the 315-residue chain is p-hydroxyphenylacetate 3-hydroxylase, reductase component (315 aa).

The protein belongs to the non-flavoprotein flavin reductase family. Homodimer. The p-hydroxyphenylacetate 3-hydroxylase (HpaH) is composed of an oxygenase component C2 and a reductase component C1.

It catalyses the reaction a reduced flavin + NAD(+) = an oxidized flavin + NADH + 2 H(+). It functions in the pathway aromatic compound metabolism; 4-hydroxyphenylacetate degradation; pyruvate and succinate semialdehyde from 4-hydroxyphenylacetate: step 1/7. Flavin concentrations greater than 15 uM do not inhibit the NADH oxidation activity of the reductase component C1 but do affect the hydroxylation activity of the C1-C2 complex. Maximal reductase activity is achieved only upon HPA binding to the reductase component C1 before interaction with NADH. HPA stimulates the rates of both the reduction of FMN and release of reduced FMN from the reductase component. In terms of biological role, reductase component of a two-component system that supplies reduced FMN (FMNH2) to the oxygenase component to catalyze the hydroxylation of 4-hydroxyphenylacetic acid, leading to the production of 3,4-dihydroxyphenylacetate (3,4-DHPA). Catalyzes the reduction of free flavins (FMN, FAD and riboflavin) by NADH. Subsequently, the reduced flavins diffuse to the oxygenase component C2. The polypeptide is p-hydroxyphenylacetate 3-hydroxylase, reductase component (Acinetobacter baumannii).